Reading from the N-terminus, the 618-residue chain is 1-deoxy-D-xylulose-5-phosphate synthase (618 aa).

Residues His70 and 111–113 (GHS) contribute to the thiamine diphosphate site. A Mg(2+)-binding site is contributed by Asp142. Thiamine diphosphate-binding positions include 143-144 (GS), Asn171, Tyr278, and Glu360. Position 171 (Asn171) interacts with Mg(2+).

The protein belongs to the transketolase family. DXPS subfamily. In terms of assembly, homodimer. Requires Mg(2+) as cofactor. Thiamine diphosphate serves as cofactor.

The catalysed reaction is D-glyceraldehyde 3-phosphate + pyruvate + H(+) = 1-deoxy-D-xylulose 5-phosphate + CO2. It functions in the pathway metabolic intermediate biosynthesis; 1-deoxy-D-xylulose 5-phosphate biosynthesis; 1-deoxy-D-xylulose 5-phosphate from D-glyceraldehyde 3-phosphate and pyruvate: step 1/1. Catalyzes the acyloin condensation reaction between C atoms 2 and 3 of pyruvate and glyceraldehyde 3-phosphate to yield 1-deoxy-D-xylulose-5-phosphate (DXP). The chain is 1-deoxy-D-xylulose-5-phosphate synthase from Helicobacter pylori (strain HPAG1).